A 266-amino-acid polypeptide reads, in one-letter code: Putative carbamate hydrolase RutD (266 aa).

It belongs to the AB hydrolase superfamily. Hydrolase RutD family.

The enzyme catalyses carbamate + 2 H(+) = NH4(+) + CO2. Its function is as follows. Involved in pyrimidine catabolism. May facilitate the hydrolysis of carbamate, a reaction that can also occur spontaneously. This chain is Putative carbamate hydrolase RutD, found in Enterobacter cloacae subsp. cloacae (strain ATCC 13047 / DSM 30054 / NBRC 13535 / NCTC 10005 / WDCM 00083 / NCDC 279-56).